The sequence spans 235 residues: 1-(5-phosphoribosyl)-5-[(5-phosphoribosylamino)methylideneamino] imidazole-4-carboxamide isomerase (235 aa).

The Proton acceptor role is filled by D8. Residue D128 is the Proton donor of the active site.

The protein belongs to the HisA/HisF family.

It localises to the cytoplasm. The catalysed reaction is 1-(5-phospho-beta-D-ribosyl)-5-[(5-phospho-beta-D-ribosylamino)methylideneamino]imidazole-4-carboxamide = 5-[(5-phospho-1-deoxy-D-ribulos-1-ylimino)methylamino]-1-(5-phospho-beta-D-ribosyl)imidazole-4-carboxamide. It participates in amino-acid biosynthesis; L-histidine biosynthesis; L-histidine from 5-phospho-alpha-D-ribose 1-diphosphate: step 4/9. In Thermus thermophilus (strain ATCC 27634 / DSM 579 / HB8), this protein is 1-(5-phosphoribosyl)-5-[(5-phosphoribosylamino)methylideneamino] imidazole-4-carboxamide isomerase.